A 216-amino-acid polypeptide reads, in one-letter code: MTGSMIVNNLAGLMMLTSLFVISVKSYRLSCGFYACQSLVLVSIFATLSCLFAAEQLLIWSASAFITKVLLVPLIMTYAARNIPQNIPEKALFGPAMMALLAALIVLLCAFVVQPVKLPMATGLKPALAVALGHFLLGLLCIVSQRNILRQIFGYCLMENGSHLVLALLAWRAPELVEIGIATDAIFAVIVMVLLARKIWRTHGTLDVNNLTALKG.

Residues 1-3 (MTG) lie on the Periplasmic side of the membrane. Residues 4–24 (SMIVNNLAGLMMLTSLFVISV) form a helical membrane-spanning segment. The Cytoplasmic portion of the chain corresponds to 25–38 (KSYRLSCGFYACQS). The next 2 helical transmembrane spans lie at 39 to 59 (LVLV…QLLI) and 60 to 80 (WSAS…TYAA). Residues 81-92 (RNIPQNIPEKAL) are Cytoplasmic-facing. The helical transmembrane segment at 93–113 (FGPAMMALLAALIVLLCAFVV) threads the bilayer. Residues 114–122 (QPVKLPMAT) are Periplasmic-facing. The chain crosses the membrane as a helical span at residues 123-143 (GLKPALAVALGHFLLGLLCIV). Residues 144–150 (SQRNILR) lie on the Cytoplasmic side of the membrane. Residues 151 to 171 (QIFGYCLMENGSHLVLALLAW) traverse the membrane as a helical segment. Residues 172–175 (RAPE) are Periplasmic-facing. A helical transmembrane segment spans residues 176–196 (LVEIGIATDAIFAVIVMVLLA). Residues 197–216 (RKIWRTHGTLDVNNLTALKG) lie on the Cytoplasmic side of the membrane.

Its subcellular location is the cell inner membrane. The chain is Hydrogenase-4 component E (hyfE) from Escherichia coli O157:H7.